The following is a 554-amino-acid chain: Germacrene A synthase (554 aa).

Residues aspartate 306, aspartate 310, threonine 453, and glutamate 457 each contribute to the Mg(2+) site. The short motif at 306–310 (DDTYD) is the DDXXD motif element.

The protein belongs to the terpene synthase family. The cofactor is Mg(2+).

The protein localises to the cytoplasm. The protein resides in the cytosol. The catalysed reaction is (2E,6E)-farnesyl diphosphate = (+)-(R)-germacrene A + diphosphate. The protein operates within secondary metabolite biosynthesis; terpenoid biosynthesis. In terms of biological role, sesquiterpene synthase involved in germacrene A biosynthesis. Also produces additional sesquiterpene products, including 4,5-di-epi-aristolochene, eremophilene, alpha-selinene. In Pogostemon cablin (Patchouli), this protein is Germacrene A synthase.